A 648-amino-acid polypeptide reads, in one-letter code: Macrolide export ATP-binding/permease protein MacB (648 aa).

An ABC transporter domain is found at 5–243; that stretch reads LELKDIRRSY…AGGTEPVVNT (239 aa). 41–48 contributes to the ATP binding site; the sequence is GASGSGKS. 4 helical membrane passes run 273 to 293, 523 to 543, 576 to 596, and 611 to 631; these read LLTM…VVVG, LFMT…VMNI, AVLV…LIAF, and PLAL…FGWL.

This sequence belongs to the ABC transporter superfamily. Macrolide exporter (TC 3.A.1.122) family. In terms of assembly, homodimer. Part of the tripartite efflux system MacAB-TolC, which is composed of an inner membrane transporter, MacB, a periplasmic membrane fusion protein, MacA, and an outer membrane component, TolC. The complex forms a large protein conduit and can translocate molecules across both the inner and outer membranes. Interacts with MacA.

Its subcellular location is the cell inner membrane. Functionally, part of the tripartite efflux system MacAB-TolC. MacB is a non-canonical ABC transporter that contains transmembrane domains (TMD), which form a pore in the inner membrane, and an ATP-binding domain (NBD), which is responsible for energy generation. Confers resistance against macrolides. The chain is Macrolide export ATP-binding/permease protein MacB from Escherichia coli O157:H7.